We begin with the raw amino-acid sequence, 440 residues long: Aspartokinase (440 aa).

Belongs to the aspartokinase family.

It carries out the reaction L-aspartate + ATP = 4-phospho-L-aspartate + ADP. Its pathway is amino-acid biosynthesis; L-lysine biosynthesis via DAP pathway; (S)-tetrahydrodipicolinate from L-aspartate: step 1/4. It participates in amino-acid biosynthesis; L-methionine biosynthesis via de novo pathway; L-homoserine from L-aspartate: step 1/3. It functions in the pathway amino-acid biosynthesis; L-threonine biosynthesis; L-threonine from L-aspartate: step 1/5. This is Aspartokinase (lysC) from Chlamydia pneumoniae (Chlamydophila pneumoniae).